A 422-amino-acid chain; its full sequence is Cell division protein DivIB (422 aa).

Basic and acidic residues-rich tracts occupy residues 1–23 (MVDW…KQEE) and 62–75 (EEAK…DQEQ). Positions 1–77 (MVDWDKEAQR…DFAKDQEQKH (77 aa)) are disordered. Over 1 to 109 (MVDWDKEAQR…LQLKSVSWSR (109 aa)) the chain is Cytoplasmic. A helical membrane pass occupies residues 110-130 (LILAAAFLFMIIFSAFWLSPL). The 72-residue stretch at 131-202 (NRIATIEVSG…RTVEVNVQEF (72 aa)) folds into the POTRA domain. The Extracellular portion of the chain corresponds to 131-422 (NRIATIEVSG…TVTQTRSSNS (292 aa)). Residues 329-422 (NPLNDPFASP…TVTQTRSSNS (94 aa)) are disordered. Residues 338-379 (PEEKASYQEKVDQAKEKSKEKQAKADKHSSESKLGDKPKPRG) are compositionally biased toward basic and acidic residues. Residues 389–422 (TSSQRQTSSQSSPRPGTNSSQQSSTVTQTRSSNS) show a composition bias toward low complexity.

Belongs to the FtsQ/DivIB family. DivIB subfamily.

It is found in the cell membrane. Its function is as follows. Cell division protein that may be involved in stabilizing or promoting the assembly of the division complex. This Aerococcus urinae (strain CCUG 59500 / ACS-120-V-Col10a) protein is Cell division protein DivIB.